Reading from the N-terminus, the 558-residue chain is ATP synthase subunit alpha (558 aa).

Residue 172–179 (GDRKTGKT) participates in ATP binding. The interval 536–558 (ESVKVHQAIPAKTSEKSKNSTPR) is disordered. Basic and acidic residues predominate over residues 548–558 (TSEKSKNSTPR).

The protein belongs to the ATPase alpha/beta chains family. In terms of assembly, F-type ATPases have 2 components, CF(1) - the catalytic core - and CF(0) - the membrane proton channel. CF(1) has five subunits: alpha(3), beta(3), gamma(1), delta(1), epsilon(1). CF(0) has three main subunits: a(1), b(2) and c(9-12). The alpha and beta chains form an alternating ring which encloses part of the gamma chain. CF(1) is attached to CF(0) by a central stalk formed by the gamma and epsilon chains, while a peripheral stalk is formed by the delta and b chains.

Its subcellular location is the cell membrane. The enzyme catalyses ATP + H2O + 4 H(+)(in) = ADP + phosphate + 5 H(+)(out). Functionally, produces ATP from ADP in the presence of a proton gradient across the membrane. The alpha chain is a regulatory subunit. This is ATP synthase subunit alpha from Mycobacterium leprae (strain Br4923).